The primary structure comprises 771 residues: Choline transporter-like protein 1 (771 aa).

Residues 96–116 traverse the membrane as a helical segment; the sequence is FLFFVFLCGWVVVAGFGIMWG. N-linked (GlcNAc...) asparagine glycosylation is found at Asn141 and Asn259. Transmembrane regions (helical) follow at residues 312–332, 335–355, 392–412, and 441–461; these read WWQTLILIFAAGILSFIWTVI, LLGSLIIWLSILIVLVALGFG, LVVAIATSVLLLIFLLVILFI, and LFPFLLHIGVFALWGSIAIWL. A glycan (N-linked (GlcNAc...) asparagine) is linked at Asn480. 5 consecutive transmembrane segments (helical) span residues 514-534, 566-586, 603-623, 662-682, and 701-721; these read LFAFFWLSCFVTALGDIALAG, LGSIAFGSLIIAIVKIIRVLL, WFLMCLKCCFWCLEVFFKFLT, AGILLFLGKSMITLGMGILSF, and YYFVPIVIVVIGSYFMADLFF.

This sequence belongs to the CTL (choline transporter-like) family.

Its subcellular location is the membrane. The polypeptide is Choline transporter-like protein 1 (chtl-1) (Caenorhabditis elegans).